The chain runs to 165 residues: Phosphopantetheine adenylyltransferase (165 aa).

Thr-10 serves as a coordination point for substrate. ATP contacts are provided by residues Thr-10–Phe-11 and His-18. Positions 42, 75, and 89 each coordinate substrate. ATP-binding positions include Gly-90–Arg-92, Glu-100, and Val-125–Ser-131.

The protein belongs to the bacterial CoaD family. In terms of assembly, homohexamer. The cofactor is Mg(2+).

Its subcellular location is the cytoplasm. The enzyme catalyses (R)-4'-phosphopantetheine + ATP + H(+) = 3'-dephospho-CoA + diphosphate. Its pathway is cofactor biosynthesis; coenzyme A biosynthesis; CoA from (R)-pantothenate: step 4/5. In terms of biological role, reversibly transfers an adenylyl group from ATP to 4'-phosphopantetheine, yielding dephospho-CoA (dPCoA) and pyrophosphate. The protein is Phosphopantetheine adenylyltransferase of Buchnera aphidicola subsp. Acyrthosiphon pisum (strain 5A).